Consider the following 214-residue polypeptide: Small ribosomal subunit protein uS5 (214 aa).

The region spanning 54–117 (MKYEVIDIGM…RDAKMHVIPV (64 aa)) is the S5 DRBM domain.

Belongs to the universal ribosomal protein uS5 family. Part of the 30S ribosomal subunit. Contacts protein S4.

Functionally, with S4 and S12 plays an important role in translational accuracy. The sequence is that of Small ribosomal subunit protein uS5 from Metallosphaera sedula (strain ATCC 51363 / DSM 5348 / JCM 9185 / NBRC 15509 / TH2).